The chain runs to 364 residues: Protein IncC (364 aa).

Composition is skewed to basic and acidic residues over residues 1–10, 26–42, and 89–100; these read MGVIHEETAY, ADHR…EATG, and HRPEVGSGRQEK. Disordered regions lie at residues 1 to 63 and 75 to 102; these read MGVI…ASRV and VRAG…EKTG.

The protein belongs to the ParA family.

Functionally, this is one of the proteins encoded by the trfB operon; it is involved in plasmid maintenance and replication. In Escherichia coli, this protein is Protein IncC (incC).